The primary structure comprises 298 residues: (DL)-glycerol-3-phosphatase 1, mitochondrial (298 aa).

The transit peptide at 1-46 (MLTTPTRFVALRIPFRSSNKIPISIAPSPKVFPRKPVIRVPASLRF) directs the protein to the mitochondrion. The Nucleophile role is filled by D77. Residues D77, D79, and D242 each coordinate Mg(2+). D79 functions as the Proton donor in the catalytic mechanism.

The protein belongs to the HAD-like hydrolase superfamily. DOG/GPP family. The cofactor is Mg(2+). As to expression, ubiquitous with highest expression in siliques. Mainly restricted to the meristem of immature flower and vascular elements of the root, shoot, leave, siliqua and developing embryo (at the protein level).

It is found in the mitochondrion. It catalyses the reaction sn-glycerol 1-phosphate + H2O = glycerol + phosphate. The enzyme catalyses sn-glycerol 3-phosphate + H2O = glycerol + phosphate. The catalysed reaction is 5-amino-6-(5-phospho-D-ribitylamino)uracil + H2O = 5-amino-6-(D-ribitylamino)uracil + phosphate. In terms of biological role, acts as a glycerol-3-phosphatase with higher stereospecificity for L-glycerol-3-phosphate than DL-glycerol-3-phosphate. Can also dephosphorylate in vitro 5-amino-6-(5-phospho-D-ribitylamino)uracil, also known as ARPP. In Arabidopsis thaliana (Mouse-ear cress), this protein is (DL)-glycerol-3-phosphatase 1, mitochondrial.